Consider the following 419-residue polypeptide: Probable pectate lyase C (419 aa).

Positions 1 to 19 (MRLGIALFSLIGLCHSVSA) are cleaved as a signal peptide. N-linked (GlcNAc...) asparagine glycans are attached at residues Asn-48, Asn-164, and Asn-201. The active site involves Arg-204. An EF-hand domain is found at 261 to 296 (NEYFHGYVETNYYDPDRDGTLNGNELGVSASNYGGM). Residues Asp-274, Asp-276, Asp-278, Thr-280, and Glu-285 each contribute to the Ca(2+) site. The segment at 350 to 395 (ELISDEASMGGPGDLDGGSPPTDSDGDGIPDDAETEIGSDPNTADS) is disordered. Acidic residues predominate over residues 373–386 (SDGDGIPDDAETEI).

It belongs to the polysaccharide lyase 1 family. The cofactor is Ca(2+).

Its subcellular location is the secreted. It carries out the reaction Eliminative cleavage of (1-&gt;4)-alpha-D-galacturonan to give oligosaccharides with 4-deoxy-alpha-D-galact-4-enuronosyl groups at their non-reducing ends.. Pectinolytic enzyme consist of four classes of enzymes: pectin lyase, polygalacturonase, pectin methylesterase and rhamnogalacturonase. Among pectinolytic enzymes, pectin lyase is the most important in depolymerization of pectin, since it cleaves internal glycosidic bonds of highly methylated pectins. Favors pectate, the anion, over pectin, the methyl ester. The polypeptide is Probable pectate lyase C (plyC) (Aspergillus terreus (strain NIH 2624 / FGSC A1156)).